Consider the following 387-residue polypeptide: uncharacterized protein (387 aa).

Belongs to the geranylgeranyl reductase family. ChlP subfamily.

This is an uncharacterized protein from Methanocaldococcus jannaschii (strain ATCC 43067 / DSM 2661 / JAL-1 / JCM 10045 / NBRC 100440) (Methanococcus jannaschii).